Consider the following 208-residue polypeptide: Redox-sensing transcriptional repressor Rex (208 aa).

Positions 16–55 (VYSRYLENLYRKGITTVSSADIAQGVGVTSAQVRKDLAYF) form a DNA-binding region, H-T-H motif. 90 to 95 (GAGNLG) is a binding site for NAD(+).

The protein belongs to the transcriptional regulatory Rex family. In terms of assembly, homodimer.

The protein localises to the cytoplasm. Its function is as follows. Modulates transcription in response to changes in cellular NADH/NAD(+) redox state. This is Redox-sensing transcriptional repressor Rex from Carboxydothermus hydrogenoformans (strain ATCC BAA-161 / DSM 6008 / Z-2901).